A 184-amino-acid chain; its full sequence is GTPase RhebL1 (184 aa).

GTP-binding positions include 16–21 (SVGKTS), 32–38 (LEGYDPT), Gly-63, 119–122 (NKAD), and 149–150 (SA). Residues 35–43 (YDPTVENTY) carry the Effector region motif. Thr-38 contributes to the Mg(2+) binding site. The residue at position 181 (Cys-181) is a Cysteine methyl ester. The S-farnesyl cysteine moiety is linked to residue Cys-181. Positions 182–184 (YLM) are cleaved as a propeptide — removed in mature form.

This sequence belongs to the small GTPase superfamily. Rheb family. As to quaternary structure, interacts with MTOR.

It localises to the endomembrane system. The protein localises to the cytoplasm. It carries out the reaction GTP + H2O = GDP + phosphate + H(+). Its function is as follows. Binds GTP and exhibits intrinsic GTPase activity. May activate NF-kappa-B-mediated gene transcription. Promotes signal transduction through MTOR, activates RPS6KB1, and is a downstream target of the small GTPase-activating proteins TSC1 and TSC2. The chain is GTPase RhebL1 (Rhebl1) from Mus musculus (Mouse).